A 602-amino-acid chain; its full sequence is UvrABC system protein C (602 aa).

One can recognise a GIY-YIG domain in the interval 15-92 (DLPGSYQMKD…IQKYQPYYNI (78 aa)). The UVR domain occupies 197-232 (GKAKASLTAKMERAAKNLQFERAAEIRDQLHYIEQT).

Belongs to the UvrC family. Interacts with UvrB in an incision complex.

Its subcellular location is the cytoplasm. In terms of biological role, the UvrABC repair system catalyzes the recognition and processing of DNA lesions. UvrC both incises the 5' and 3' sides of the lesion. The N-terminal half is responsible for the 3' incision and the C-terminal half is responsible for the 5' incision. The protein is UvrABC system protein C of Lacticaseibacillus casei (strain BL23) (Lactobacillus casei).